The primary structure comprises 277 residues: Bifunctional protein FolD (277 aa).

Residues 164–166, S189, and V230 each bind NADP(+); that span reads GRS.

Belongs to the tetrahydrofolate dehydrogenase/cyclohydrolase family. Homodimer.

It carries out the reaction (6R)-5,10-methylene-5,6,7,8-tetrahydrofolate + NADP(+) = (6R)-5,10-methenyltetrahydrofolate + NADPH. The catalysed reaction is (6R)-5,10-methenyltetrahydrofolate + H2O = (6R)-10-formyltetrahydrofolate + H(+). It participates in one-carbon metabolism; tetrahydrofolate interconversion. Catalyzes the oxidation of 5,10-methylenetetrahydrofolate to 5,10-methenyltetrahydrofolate and then the hydrolysis of 5,10-methenyltetrahydrofolate to 10-formyltetrahydrofolate. The sequence is that of Bifunctional protein FolD from Exiguobacterium sibiricum (strain DSM 17290 / CCUG 55495 / CIP 109462 / JCM 13490 / 255-15).